We begin with the raw amino-acid sequence, 274 residues long: 3-methyl-2-oxobutanoate hydroxymethyltransferase (274 aa).

Mg(2+) is bound by residues Asp-49 and Asp-88. 3-methyl-2-oxobutanoate contacts are provided by residues 49–50 (DS), Asp-88, and Lys-118. A Mg(2+)-binding site is contributed by Glu-120. Glu-187 acts as the Proton acceptor in catalysis.

The protein belongs to the PanB family. Homodecamer; pentamer of dimers. Mg(2+) serves as cofactor.

It localises to the cytoplasm. The catalysed reaction is 3-methyl-2-oxobutanoate + (6R)-5,10-methylene-5,6,7,8-tetrahydrofolate + H2O = 2-dehydropantoate + (6S)-5,6,7,8-tetrahydrofolate. Its pathway is cofactor biosynthesis; (R)-pantothenate biosynthesis; (R)-pantoate from 3-methyl-2-oxobutanoate: step 1/2. Functionally, catalyzes the reversible reaction in which hydroxymethyl group from 5,10-methylenetetrahydrofolate is transferred onto alpha-ketoisovalerate to form ketopantoate. The protein is 3-methyl-2-oxobutanoate hydroxymethyltransferase of Rhodopseudomonas palustris (strain HaA2).